A 460-amino-acid polypeptide reads, in one-letter code: UDP-N-acetylmuramate--L-alanine ligase (460 aa).

118–124 (GTHGKTT) is an ATP binding site.

This sequence belongs to the MurCDEF family.

It is found in the cytoplasm. It catalyses the reaction UDP-N-acetyl-alpha-D-muramate + L-alanine + ATP = UDP-N-acetyl-alpha-D-muramoyl-L-alanine + ADP + phosphate + H(+). The protein operates within cell wall biogenesis; peptidoglycan biosynthesis. In terms of biological role, cell wall formation. This chain is UDP-N-acetylmuramate--L-alanine ligase, found in Gloeobacter violaceus (strain ATCC 29082 / PCC 7421).